The chain runs to 395 residues: MNAPVNTPPRPALAIARELAGQFAQTAVERDDRGGTPKAERDALRDSGLLSLVIPQAFGGQGASWHDTFAVVREFARVDSSIAHVFGFHHLMLATVRLFSRPDQWQPWFEQTARKQWFWGNALNPLDTRTVVKHFDGWCEFSGKKSFCSGASDSEMLIASAVDERAGGKLLIAAIPSGRTGISLHNDWNNIGQRQTDSGSATFERVRVEHNELLLDPGPLSTPFAALRPLIAQLHFANLFLGIAEGAFEEARQYTLKESRPWFRSSAASSAEDPYVLRHYGEFWVGLESVRLLIERAARQLDAAWAKEHALTAQERGDLALAIGTAKVAASRHGLDICNRLFEVTGARATHASLRFDRHWRNLRTQTLHDPVDYRIHELGEWALNDKRPAPSFYS.

Its function is as follows. Involved in the dimethyl sulfide degradation pathway. The polypeptide is Probable FMNH2-dependent monooxygenase SfnC (Pseudomonas putida (Arthrobacter siderocapsulatus)).